The chain runs to 294 residues: 33 kDa chaperonin (294 aa).

2 cysteine pairs are disulfide-bonded: C238–C240 and C271–C274.

This sequence belongs to the HSP33 family. Post-translationally, under oxidizing conditions two disulfide bonds are formed involving the reactive cysteines. Under reducing conditions zinc is bound to the reactive cysteines and the protein is inactive.

The protein resides in the cytoplasm. Functionally, redox regulated molecular chaperone. Protects both thermally unfolding and oxidatively damaged proteins from irreversible aggregation. Plays an important role in the bacterial defense system toward oxidative stress. The polypeptide is 33 kDa chaperonin (Caldanaerobacter subterraneus subsp. tengcongensis (strain DSM 15242 / JCM 11007 / NBRC 100824 / MB4) (Thermoanaerobacter tengcongensis)).